A 182-amino-acid chain; its full sequence is Flightin (182 aa).

Residues 1 to 15 are compositionally biased toward acidic residues; the sequence is MADEEDPWGFDDGGE. Positions 1–76 are disordered; sequence MADEEDPWGF…PPPPEDDGYR (76 aa).

Post-translationally, several forms of flightin are thought to be produced through post-translational modifications, possibly by phosphorylation. In terms of tissue distribution, found only in indirect flight muscles (IFM).

Possibly involved in the regulation of flight muscles contraction, possibly by modulating actin-myosin interaction. In Drosophila melanogaster (Fruit fly), this protein is Flightin (fln).